The sequence spans 51 residues: Astexin-1 (51 aa).

The propeptide occupies 1–28 (MHTPIISETVQPKTAGLIVLGKASAETR). The segment at residues 29–37 (GLSQGVEPD) is a cross-link (isoaspartyl glycine isopeptide (Gly-Asp)).

This lasso peptide is probably hydrolyzed to a linear form by the isopeptidase AtxE1, in vivo.

Its function is as follows. Shows weak antimicrobial activity against its phylogenetic relative Caulobacter crescentus. Does not show activity against other bacteria tested (E.coli, Vibrio sp, Burkhoderia thailandensis, and Salmonella newport). In Asticcacaulis excentricus (strain ATCC 15261 / DSM 4724 / KCTC 12464 / NCIMB 9791 / VKM B-1370 / CB 48), this protein is Astexin-1.